The sequence spans 365 residues: Glycolaldehyde reductase (365 aa).

Aspartate 37, glycine 94, lysine 95, threonine 116, serine 119, serine 125, leucine 127, and tyrosine 131 together coordinate NAD(+). The Zn(2+) site is built by aspartate 171, histidine 254, and histidine 271.

It belongs to the iron-containing alcohol dehydrogenase family. Zn(2+) is required as a cofactor.

It carries out the reaction ethylene glycol + NAD(+) = glycolaldehyde + NADH + H(+). Its activity is regulated as follows. Is subject to substrate inhibition. Oxidoreductase involved in the non-carboxylating pentose bisphosphate pathway, a nucleoside degradation pathway present in some halophilic archaea. Catalyzes the reduction of glycolaldehyde to ethylene glycol. Cannot catalyze the oxidation of glycerol 1-phosphate nor the reduction of dihydroxyacetone phosphate (DHAP). This Halobacterium salinarum (strain ATCC 700922 / JCM 11081 / NRC-1) (Halobacterium halobium) protein is Glycolaldehyde reductase.